The chain runs to 208 residues: Thiamine-phosphate synthase (208 aa).

Residues 37 to 39 (QVR) and asparagine 70 each bind 4-amino-2-methyl-5-(diphosphooxymethyl)pyrimidine. Aspartate 71 and aspartate 90 together coordinate Mg(2+). Threonine 109 is a binding site for 4-amino-2-methyl-5-(diphosphooxymethyl)pyrimidine. 135–137 (TTS) contributes to the 2-[(2R,5Z)-2-carboxy-4-methylthiazol-5(2H)-ylidene]ethyl phosphate binding site. Residue lysine 138 participates in 4-amino-2-methyl-5-(diphosphooxymethyl)pyrimidine binding. Residue alanine 166 participates in 2-[(2R,5Z)-2-carboxy-4-methylthiazol-5(2H)-ylidene]ethyl phosphate binding.

This sequence belongs to the thiamine-phosphate synthase family. Mg(2+) is required as a cofactor.

It carries out the reaction 2-[(2R,5Z)-2-carboxy-4-methylthiazol-5(2H)-ylidene]ethyl phosphate + 4-amino-2-methyl-5-(diphosphooxymethyl)pyrimidine + 2 H(+) = thiamine phosphate + CO2 + diphosphate. The catalysed reaction is 2-(2-carboxy-4-methylthiazol-5-yl)ethyl phosphate + 4-amino-2-methyl-5-(diphosphooxymethyl)pyrimidine + 2 H(+) = thiamine phosphate + CO2 + diphosphate. It catalyses the reaction 4-methyl-5-(2-phosphooxyethyl)-thiazole + 4-amino-2-methyl-5-(diphosphooxymethyl)pyrimidine + H(+) = thiamine phosphate + diphosphate. It functions in the pathway cofactor biosynthesis; thiamine diphosphate biosynthesis; thiamine phosphate from 4-amino-2-methyl-5-diphosphomethylpyrimidine and 4-methyl-5-(2-phosphoethyl)-thiazole: step 1/1. Functionally, condenses 4-methyl-5-(beta-hydroxyethyl)thiazole monophosphate (THZ-P) and 2-methyl-4-amino-5-hydroxymethyl pyrimidine pyrophosphate (HMP-PP) to form thiamine monophosphate (TMP). The protein is Thiamine-phosphate synthase of Salinispora tropica (strain ATCC BAA-916 / DSM 44818 / JCM 13857 / NBRC 105044 / CNB-440).